A 503-amino-acid polypeptide reads, in one-letter code: UDP-N-acetylglucosamine--peptide N-acetylglucosaminyltransferase GtfA subunit (503 aa).

Residues 1 to 78 (MTIYNINLGI…FTDIKIAPTS (78 aa)) form an N-terminus R-fold-1 region. 16-19 (GVEY) is a UDP binding site. The interval 79–195 (VTVDDVLAYF…VYHFKDKIFY (117 aa)) is extended beta-sheet domain. Residues 196 to 306 (GKQAFVRAFM…QPKIVTIPVG (111 aa)) form a C-terminus R-fold-1 region. Residue H242 participates in N-acetyl-D-glucosamine binding. An R-fold-2 region spans residues 307-503 (SIDSLTDSSQ…KKTVEEVLHD (197 aa)). Residue R328 coordinates UDP. E332 lines the N-acetyl-D-glucosamine pocket. UDP contacts are provided by residues K333, G358, and 384 to 385 (HA). An N-acetyl-D-glucosamine-binding site is contributed by 404–407 (EGFG). Residue 408–412 (LTLME) coordinates UDP.

Belongs to the glycosyltransferase group 1 family. Glycosyltransferase 4 subfamily. As to quaternary structure, monomer. Interacts with stabilizing protein GtfB, probably as a heterotetramer with 2 subunits each of GtfA and GtfB, part of the accessory SecA2/SecY2 protein translocation apparatus.

The protein localises to the cytoplasm. The protein resides in the cell membrane. The enzyme catalyses L-seryl-[protein] + UDP-N-acetyl-alpha-D-glucosamine = 3-O-[N-acetyl-alpha-D-glucosaminyl]-L-seryl-[protein] + UDP + H(+). It functions in the pathway protein modification; protein glycosylation. Its function is as follows. Required for the polymorphic O-glycosylation of serine-rich repeat protein PsrP. Catalyzes the first step in glycosylation by transferring N-acetylglucosamine from UDP-GlcNAc to serine residues in PsrP. Part of the accessory SecA2/SecY2 system specifically required to export serine-rich repeat cell wall proteins encoded upstream in the same operon. The GtfA-GtfB complex adds GlcNAc from UDP-GlcNAc to PsrP (experimentally characterized with truncated PsrP-SSR1 constructs); this subunit alone has weak N-acetylglucosaminyl transferase activity that is 10-fold stimulated by GtfB. The complex requires at least a 25 residue-long peptide for activity; the in vitro assay has only been seen to glycosylate Ser residues. The alpha linkage was shown in L.reuteri. The chain is UDP-N-acetylglucosamine--peptide N-acetylglucosaminyltransferase GtfA subunit from Streptococcus pneumoniae serotype 4 (strain ATCC BAA-334 / TIGR4).